A 106-amino-acid polypeptide reads, in one-letter code: NADH dehydrogenase [ubiquinone] iron-sulfur protein 5 (106 aa).

The CHCH domain maps to 30 to 74; the sequence is AGRCHAFEKEWIECAHGIGYTRAEKECKIEYDDFVECLLRQKTMR. 2 short sequence motifs (cx9C motif) span residues 33–43 and 56–66; these read CHAFEKEWIEC and CKIEYDDFVEC. 2 disulfides stabilise this stretch: Cys33–Cys66 and Cys43–Cys56. Residues 84 to 106 are disordered; that stretch reads DKLIKEGKYTPPPHHIGKGEPRP.

It belongs to the complex I NDUFS5 subunit family. As to quaternary structure, mammalian complex I is composed of 45 different subunits. This is a component of the iron-sulfur (IP) fragment of the enzyme.

The protein localises to the mitochondrion inner membrane. The protein resides in the mitochondrion intermembrane space. Accessory subunit of the mitochondrial membrane respiratory chain NADH dehydrogenase (Complex I), that is believed not to be involved in catalysis. Complex I functions in the transfer of electrons from NADH to the respiratory chain. The immediate electron acceptor for the enzyme is believed to be ubiquinone. The polypeptide is NADH dehydrogenase [ubiquinone] iron-sulfur protein 5 (NDUFS5) (Homo sapiens (Human)).